A 31-amino-acid polypeptide reads, in one-letter code: Nemertide alpha-5 (31 aa).

Disulfide bonds link Cys-2–Cys-16, Cys-9–Cys-20, and Cys-15–Cys-26. 2 positions are modified to 4-hydroxyproline: Pro-28 and Pro-29.

This sequence belongs to the nemertide family. In terms of tissue distribution, confined to the epidermis and to the mucus layer.

It localises to the secreted. In terms of biological role, highly potent toxin against both insect and some mammalian sodium channels (Nav). It potently inhibits inactivation of insect sodium channels of B.germanica (BgNav1) (EC(50)=7.8 nM) and also delays the inactivation of mammalian Nav with potent activity on Nav1.3/SCN3A and Nav1.4/SCN4A (hNav1.1/SCN1A; EC(50)=102.1 nM, rNav1.2/SCN2A; EC(50)=156.1 nM, rNav1.3/SCN3A; EC(50)=9.4 nM, rNav1.4/SCN4A; EC(50)=15.4 nM, hNav1.5/SCN5A; EC(50)=132.7 nM, mNav1.6/SCN8A; EC(50)=66.9 nM, hNav1.9/SCN9A; EC(50)=73 nM). 1 uM is enough to completely inhibits the inactivation, resulting in sustained non-inactivating currents. In addition, the toxin significantly enhances the recovery from inactivation, and the open state is not required for the toxin to interact with the channel. In vivo, injection into brine shrimp (Artemia salina) stops movement or causes death after 24 hours (EC(50)=0.4 uM). This is Nemertide alpha-5 from Ramphogordius pseudolacteus (Ribbon worm).